A 157-amino-acid polypeptide reads, in one-letter code: Crossover junction endodeoxyribonuclease RuvC (157 aa).

Catalysis depends on residues Asp-7, Glu-67, and Asp-140. 3 residues coordinate Mg(2+): Asp-7, Glu-67, and Asp-140.

The protein belongs to the RuvC family. Homodimer which binds Holliday junction (HJ) DNA. The HJ becomes 2-fold symmetrical on binding to RuvC with unstacked arms; it has a different conformation from HJ DNA in complex with RuvA. In the full resolvosome a probable DNA-RuvA(4)-RuvB(12)-RuvC(2) complex forms which resolves the HJ. The cofactor is Mg(2+).

It localises to the cytoplasm. It catalyses the reaction Endonucleolytic cleavage at a junction such as a reciprocal single-stranded crossover between two homologous DNA duplexes (Holliday junction).. The RuvA-RuvB-RuvC complex processes Holliday junction (HJ) DNA during genetic recombination and DNA repair. Endonuclease that resolves HJ intermediates. Cleaves cruciform DNA by making single-stranded nicks across the HJ at symmetrical positions within the homologous arms, yielding a 5'-phosphate and a 3'-hydroxyl group; requires a central core of homology in the junction. The consensus cleavage sequence is 5'-(A/T)TT(C/G)-3'. Cleavage occurs on the 3'-side of the TT dinucleotide at the point of strand exchange. HJ branch migration catalyzed by RuvA-RuvB allows RuvC to scan DNA until it finds its consensus sequence, where it cleaves and resolves the cruciform DNA. The sequence is that of Crossover junction endodeoxyribonuclease RuvC from Rickettsia massiliae (strain Mtu5).